A 572-amino-acid polypeptide reads, in one-letter code: Arginine--tRNA ligase (572 aa).

A 'HIGH' region motif is present at residues 127–137 (ANPTGPLHVGH).

It belongs to the class-I aminoacyl-tRNA synthetase family. In terms of assembly, monomer.

The protein resides in the cytoplasm. The enzyme catalyses tRNA(Arg) + L-arginine + ATP = L-arginyl-tRNA(Arg) + AMP + diphosphate. This chain is Arginine--tRNA ligase, found in Vesicomyosocius okutanii subsp. Calyptogena okutanii (strain HA).